The following is a 237-amino-acid chain: Chalcone--flavanone isomerase 1 (237 aa).

Positions 48, 113, and 190 each coordinate substrate.

Belongs to the chalcone isomerase family.

It carries out the reaction a chalcone = a flavanone.. It participates in secondary metabolite biosynthesis; flavonoid biosynthesis. Functionally, catalyzes the intramolecular cyclization of bicyclic chalcones into tricyclic (S)-flavanones. Responsible for the isomerization of 4,2',4',6'-tetrahydroxychalcone (also termed chalcone) into naringenin. The protein is Chalcone--flavanone isomerase 1 (CHI1) of Fragaria ananassa (Strawberry).